The following is a 165-amino-acid chain: Chorismate pyruvate-lyase (165 aa).

4 residues coordinate substrate: Met-35, Arg-77, Leu-115, and Glu-156.

It belongs to the UbiC family. Monomer.

The protein resides in the cytoplasm. The enzyme catalyses chorismate = 4-hydroxybenzoate + pyruvate. It functions in the pathway cofactor biosynthesis; ubiquinone biosynthesis. In terms of biological role, removes the pyruvyl group from chorismate, with concomitant aromatization of the ring, to provide 4-hydroxybenzoate (4HB) for the ubiquinone pathway. This is Chorismate pyruvate-lyase from Shigella dysenteriae serotype 1 (strain Sd197).